Consider the following 128-residue polypeptide: MRIALIAHDRKKDDLVNFVDEHKELFAGHRLVATGTTGKRIMERTGLKVHRLMSGPLGGDQQMGSLVARGRLDLVIFLRDPLTPQPHEPDINALLRICDVHNVPAATNLATAAIFLRYMQDHPGNRQA.

Residues 1–128 (MRIALIAHDR…MQDHPGNRQA (128 aa)) form the MGS-like domain. Substrate-binding positions include H8, K12, 34–37 (TGTT), and 54–55 (SG). D60 functions as the Proton donor/acceptor in the catalytic mechanism. H87 provides a ligand contact to substrate.

It belongs to the methylglyoxal synthase family.

The catalysed reaction is dihydroxyacetone phosphate = methylglyoxal + phosphate. Its function is as follows. Catalyzes the formation of methylglyoxal from dihydroxyacetone phosphate. The sequence is that of Methylglyoxal synthase from Moorella thermoacetica (strain ATCC 39073 / JCM 9320).